The sequence spans 194 residues: Peptidyl-tRNA hydrolase (194 aa).

Tyr16 lines the tRNA pocket. The Proton acceptor role is filled by His21. TRNA is bound by residues Phe67, Asn69, and Asn115.

This sequence belongs to the PTH family. In terms of assembly, monomer.

Its subcellular location is the cytoplasm. It carries out the reaction an N-acyl-L-alpha-aminoacyl-tRNA + H2O = an N-acyl-L-amino acid + a tRNA + H(+). In terms of biological role, hydrolyzes ribosome-free peptidyl-tRNAs (with 1 or more amino acids incorporated), which drop off the ribosome during protein synthesis, or as a result of ribosome stalling. Functionally, catalyzes the release of premature peptidyl moieties from peptidyl-tRNA molecules trapped in stalled 50S ribosomal subunits, and thus maintains levels of free tRNAs and 50S ribosomes. The protein is Peptidyl-tRNA hydrolase of Escherichia coli O81 (strain ED1a).